The chain runs to 224 residues: DeSI-like protein At4g17486 (224 aa).

One can recognise a PPPDE domain in the interval 26 to 163 (TPVYLNVYDL…FCNCLLPESI (138 aa)). Active-site residues include histidine 51 and cysteine 125. The segment at 176–201 (EFSDEDESNSEASSVSDEEGSEQHLI) is disordered.

Belongs to the DeSI family.

The sequence is that of DeSI-like protein At4g17486 from Arabidopsis thaliana (Mouse-ear cress).